Consider the following 184-residue polypeptide: MKPDETPMFDPSLLKEVDWSQNTAIFSPAISPTHPGEGLVLRPLCTADLNKGFFKVLGQLTETGVVSPEQFMKSFEHMKKSGDYYVTVVEDVTLGQIVATATLIIEHKFIHSCAKRGRVEDVVVSDECRGKQLGKLLLSTLTLLSKKLNCYKITLECLPQNVGFYKKFDYTVSEENYMCRRFLK.

In terms of domain architecture, N-acetyltransferase spans 39–184 (LVLRPLCTAD…ENYMCRRFLK (146 aa)). Residues T61, 108–111 (KFIH), and 120–122 (EDV) each bind substrate. An acetyl-CoA-binding site is contributed by 130-135 (GKQLGK). 151 to 152 (YK) is a binding site for substrate. 165–167 (YKK) is an acetyl-CoA binding site. 2 residues coordinate substrate: E175 and R181.

Belongs to the acetyltransferase family. GNA1 subfamily. As to quaternary structure, homodimer. As to expression, ubiquitous. Shows a strong differential expression pattern in adult hematopoietic precursor cells.

It localises to the golgi apparatus membrane. Its subcellular location is the endosome membrane. The enzyme catalyses D-glucosamine 6-phosphate + acetyl-CoA = N-acetyl-D-glucosamine 6-phosphate + CoA + H(+). The protein operates within nucleotide-sugar biosynthesis; UDP-N-acetyl-alpha-D-glucosamine biosynthesis; N-acetyl-alpha-D-glucosamine 1-phosphate from alpha-D-glucosamine 6-phosphate (route I): step 1/2. This is Glucosamine 6-phosphate N-acetyltransferase (Gnpnat1) from Mus musculus (Mouse).